The chain runs to 518 residues: E3 ubiquitin-protein ligase TRIM39 (518 aa).

An RING-type zinc finger spans residues 29–70 (CSVCLEYLKEPVIIECGHNFCKACITRWWEDLERDFPCPVCR). The segment at 102-143 (RDESLCPQHHEALSLFCYEDQEAVCLICAISHTHRAHTVVPL) adopts a B box-type zinc-finger fold. 4 residues coordinate Zn(2+): cysteine 107, histidine 110, cysteine 129, and histidine 135. A coiled-coil region spans residues 181–250 (ELKRLVESRR…AHLAAEVEGK (70 aa)). Interaction with CDKN1A stretches follow at residues 268–337 (KNIP…QLIA) and 389–518 (TSGR…TDWE). One can recognise a B30.2/SPRY domain in the interval 319 to 514 (SNFPRQYFAL…NAAPLTIRPP (196 aa)).

It belongs to the TRIM/RBCC family. Isoform 1 interacts with MOAP1. Isoform 1 and isoform 2 interact with CDKN1A. Isoform 2 interacts (via domain B box-type) with CACTIN. In terms of processing, autoubiquitinated. In terms of tissue distribution, ubiquitous; highly expressed in brain, heart, kidney, liver, skeletal muscle, spleen and testis.

It localises to the cytoplasm. The protein localises to the cytosol. The protein resides in the mitochondrion. It is found in the nucleus. It carries out the reaction S-ubiquitinyl-[E2 ubiquitin-conjugating enzyme]-L-cysteine + [acceptor protein]-L-lysine = [E2 ubiquitin-conjugating enzyme]-L-cysteine + N(6)-ubiquitinyl-[acceptor protein]-L-lysine.. It functions in the pathway protein modification; protein ubiquitination. Functionally, E3 ubiquitin-protein ligase. May facilitate apoptosis by inhibiting APC/C-Cdh1-mediated poly-ubiquitination and subsequent proteasome-mediated degradation of the pro-apoptotic protein MOAP1. Regulates the G1/S transition of the cell cycle and DNA damage-induced G2 arrest by stabilizing CDKN1A/p21. Positively regulates CDKN1A/p21 stability by competing with DTL for CDKN1A/p21 binding, therefore disrupting DCX(DTL) E3 ubiquitin ligase complex-mediated CDKN1A/p21 ubiquitination and degradation. Its function is as follows. Regulates the G1/S transition of the cell cycle and DNA damage-induced G2 arrest by stabilizing CDKN1A/p21. Positively regulates CDKN1A/p21 stability by competing with DTL for CDKN1A/p21 binding, therefore disrupting DCX(DTL) E3 ubiquitin ligase complex-mediated CDKN1A/p21 ubiquitination and degradation. Negatively regulates the canonical NF-kappa-B signaling pathway via stabilization of CACTIN in an ubiquitination-independent manner. The chain is E3 ubiquitin-protein ligase TRIM39 (TRIM39) from Homo sapiens (Human).